Reading from the N-terminus, the 225-residue chain is MRLSTLSSLLLGSSSIVFARVPPTVDNQEPIKSTSYFLDDPDFPSHFEFENPETNCKYVSQPWIYNAFNSVSEDMEAVFKYAHPDLHVRIMGHHPFAGYYHNPKMAFVNSLWRLNNCLKDAKVDAKLWAIHGGCDQAWSVQEFYFNATTNKGQPWELTSLWVSRWDEDGLIREVRTWVDAGQIMRTLWDNEIWFNSSDRVHHYDFIPGPGGLPPIANKTELGGEL.

Residues 1 to 19 (MRLSTLSSLLLGSSSIVFA) form the signal peptide. Asn-146, Asn-195, and Asn-217 each carry an N-linked (GlcNAc...) asparagine glycan.

It belongs to the dimerizing cyclase tstC family.

The enzyme catalyses 2 [4-(deca-1,8-diyl)-2,5-dioxo-2,5-dihydro-3-furanyl]acetate + H(+) = 2-[(1R,8S,14R,15R)-11-hydroxy-14,15-bis[(6E)-oct-6-en-1-yl]-3,5,9-trioxo-4,10-dioxatetracyclo[9.4.0.0(2,6).0(8,12)]pentadeca-2(6),12-dien-8-yl]acetate + CO2. The protein operates within secondary metabolite biosynthesis. In terms of biological role, dimerizing cyclase; part of the gene cluster that mediates the biosynthesis of the antihypercholesterolemic agents phomoidrides which are dimeric anhydrides. Within the pathway, tstC produces the bicyclo[4.3.1]deca-1,6-diene core of phomoidrides via the dimerization of the monomeric anhydrides leading to prephomoidride. The pathway begins with the highly reducing polyketide synthase tstA that catalyzes the formation of a C12-fatty acyl-ACP, starting from one acetate and 5 malonate units. The hydrolase tstM is involved in the release of the C12-fatty acyl chain from phiA. The alkylcitrate synthase (ACS) tstJ and the alkylcitrate dehydratase (ACDH) tstI then give rise to decarboxylated monomeric anhydrides by coupling the C12-fatty acyl chain with oxalacetic acid. The cyclase tstC is responsible for the dimerization of the monomeric anhydrides which leads to the production of prephomoidride that contains the characteristic bicyclo[4.3.1]deca-1,6-diene system of phomoidrides. Iterative oxidation catalyzed by the alpha-ketoglutarate-dependent dioxygenase tstK produced then phomoidride A. Finally, the methyltransferase tstE converts phomoidride A to phomoidride B via an acetalization reaction. The phosphatidylethanolamine-binding protein tstB and tstN are not essential for dimerization and their functions have still to be determined. This chain is Dimerizing cyclase tstC, found in Talaromyces stipitatus (strain ATCC 10500 / CBS 375.48 / QM 6759 / NRRL 1006) (Penicillium stipitatum).